The primary structure comprises 764 residues: Calpain-like protease palB/RIM13 (764 aa).

Residues 95 to 368 enclose the Calpain catalytic domain; it reads GEFYPPLTVY…FKYFYINWNP (274 aa). Residues C165, H318, and N336 contribute to the active site.

This sequence belongs to the peptidase C2 family. PalB/RIM13 subfamily.

Its function is as follows. Required for the proteolytic cleavage of the transcription factor RIM101 in response to alkaline ambient pH. This chain is Calpain-like protease palB/RIM13, found in Debaryomyces hansenii (strain ATCC 36239 / CBS 767 / BCRC 21394 / JCM 1990 / NBRC 0083 / IGC 2968) (Yeast).